The following is a 596-amino-acid chain: Putative terpene synthase 2, chloroplastic (596 aa).

A chloroplast-targeting transit peptide spans 1–46; sequence MATLSMQVSTLSKQVKNLNTFGMGSASKLPMVARRVSTTRLRPICS. The Mn(2+) site is built by D349 and D353. Residues 349–353 carry the DDXXD motif motif; the sequence is DDVYD. 2 homodimerization regions span residues 355 to 361 and 427 to 464; these read YGTLDEL and EAKW…FTLP. 2 residues coordinate Mn(2+): D493 and E501.

The protein belongs to the terpene synthase family. As to quaternary structure, homodimer. Requires Mn(2+) as cofactor. Mg(2+) serves as cofactor.

Its subcellular location is the plastid. The protein localises to the chloroplast. It participates in secondary metabolite biosynthesis; terpenoid biosynthesis. Functionally, putative monoterpene synthase inactive on geranyl diphosphate (GPP). The chain is Putative terpene synthase 2, chloroplastic from Thymus vulgaris (Thyme).